The chain runs to 236 residues: Probable 6-phosphogluconolactonase (236 aa).

The protein belongs to the glucosamine/galactosamine-6-phosphate isomerase family. 6-phosphogluconolactonase subfamily.

The enzyme catalyses 6-phospho-D-glucono-1,5-lactone + H2O = 6-phospho-D-gluconate + H(+). The protein operates within carbohydrate degradation; pentose phosphate pathway; D-ribulose 5-phosphate from D-glucose 6-phosphate (oxidative stage): step 2/3. Functionally, hydrolysis of 6-phosphogluconolactone to 6-phosphogluconate. The sequence is that of Probable 6-phosphogluconolactonase (pgl) from Dictyostelium discoideum (Social amoeba).